The chain runs to 125 residues: MKHYEVLFILKPTLTEEEVNAKLEFVKEVLTKNSAEIETVVPMGTRKLAYKIKKYERGTYFVIYFKAPTNLIAELERVLRITEEVIRFLIVKYENKKEIAAWEKLSHGIKQSKKEIKPLDAPEIQ.

This sequence belongs to the bacterial ribosomal protein bS6 family.

In terms of biological role, binds together with bS18 to 16S ribosomal RNA. The chain is Small ribosomal subunit protein bS6 from Campylobacter jejuni (strain RM1221).